The following is a 281-amino-acid chain: Formamidopyrimidine-DNA glycosylase (281 aa).

Pro-2 serves as the catalytic Schiff-base intermediate with DNA. Residue Glu-3 is the Proton donor of the active site. The active-site Proton donor; for beta-elimination activity is the Lys-58. Residues His-100, Arg-119, and Arg-160 each coordinate DNA. The FPG-type zinc-finger motif lies at 245–281 (RVYGREGAPCPTPGCTGTVQRIVQSGRSSFFCPLCQQ). The Proton donor; for delta-elimination activity role is filled by Arg-271.

This sequence belongs to the FPG family. In terms of assembly, monomer. It depends on Zn(2+) as a cofactor.

The catalysed reaction is Hydrolysis of DNA containing ring-opened 7-methylguanine residues, releasing 2,6-diamino-4-hydroxy-5-(N-methyl)formamidopyrimidine.. The enzyme catalyses 2'-deoxyribonucleotide-(2'-deoxyribose 5'-phosphate)-2'-deoxyribonucleotide-DNA = a 3'-end 2'-deoxyribonucleotide-(2,3-dehydro-2,3-deoxyribose 5'-phosphate)-DNA + a 5'-end 5'-phospho-2'-deoxyribonucleoside-DNA + H(+). In terms of biological role, involved in base excision repair of DNA damaged by oxidation or by mutagenic agents. Acts as a DNA glycosylase that recognizes and removes damaged bases. Has a preference for oxidized purines, such as 7,8-dihydro-8-oxoguanine (8-oxoG). Has AP (apurinic/apyrimidinic) lyase activity and introduces nicks in the DNA strand. Cleaves the DNA backbone by beta-delta elimination to generate a single-strand break at the site of the removed base with both 3'- and 5'-phosphates. The sequence is that of Formamidopyrimidine-DNA glycosylase from Paracoccus denitrificans (strain Pd 1222).